Here is a 425-residue protein sequence, read N- to C-terminus: Glutamate-1-semialdehyde 2,1-aminomutase (425 aa).

K264 is modified (N6-(pyridoxal phosphate)lysine).

This sequence belongs to the class-III pyridoxal-phosphate-dependent aminotransferase family. HemL subfamily. In terms of assembly, homodimer. Pyridoxal 5'-phosphate serves as cofactor.

The protein resides in the cytoplasm. It catalyses the reaction (S)-4-amino-5-oxopentanoate = 5-aminolevulinate. Its pathway is porphyrin-containing compound metabolism; protoporphyrin-IX biosynthesis; 5-aminolevulinate from L-glutamyl-tRNA(Glu): step 2/2. This chain is Glutamate-1-semialdehyde 2,1-aminomutase, found in Hydrogenobaculum sp. (strain Y04AAS1).